The sequence spans 286 residues: Formamidopyrimidine-DNA glycosylase (286 aa).

Proline 2 serves as the catalytic Schiff-base intermediate with DNA. Glutamate 3 (proton donor) is an active-site residue. Lysine 61 (proton donor; for beta-elimination activity) is an active-site residue. Residues histidine 103, arginine 122, and arginine 164 each contribute to the DNA site. The FPG-type zinc finger occupies 250–284 (NAYGQTGEPCGRCGTQIVRENFMNRGSHYCPNCQK). Catalysis depends on arginine 274, which acts as the Proton donor; for delta-elimination activity.

Belongs to the FPG family. As to quaternary structure, monomer. Zn(2+) serves as cofactor.

It carries out the reaction Hydrolysis of DNA containing ring-opened 7-methylguanine residues, releasing 2,6-diamino-4-hydroxy-5-(N-methyl)formamidopyrimidine.. The catalysed reaction is 2'-deoxyribonucleotide-(2'-deoxyribose 5'-phosphate)-2'-deoxyribonucleotide-DNA = a 3'-end 2'-deoxyribonucleotide-(2,3-dehydro-2,3-deoxyribose 5'-phosphate)-DNA + a 5'-end 5'-phospho-2'-deoxyribonucleoside-DNA + H(+). Involved in base excision repair of DNA damaged by oxidation or by mutagenic agents. Acts as a DNA glycosylase that recognizes and removes damaged bases. Has a preference for oxidized purines, such as 7,8-dihydro-8-oxoguanine (8-oxoG). Has AP (apurinic/apyrimidinic) lyase activity and introduces nicks in the DNA strand. Cleaves the DNA backbone by beta-delta elimination to generate a single-strand break at the site of the removed base with both 3'- and 5'-phosphates. In Corynebacterium glutamicum (strain R), this protein is Formamidopyrimidine-DNA glycosylase.